A 659-amino-acid polypeptide reads, in one-letter code: Ion-translocating oxidoreductase complex subunit C (659 aa).

4Fe-4S ferredoxin-type domains follow at residues 366–397 and 407–436; these read TEMG…QQLY and KARN…VQYY. Residues Cys377, Cys380, Cys383, Cys387, Cys416, Cys419, Cys422, and Cys426 each coordinate [4Fe-4S] cluster.

The protein belongs to the 4Fe4S bacterial-type ferredoxin family. RnfC subfamily. In terms of assembly, the complex is composed of six subunits: RnfA, RnfB, RnfC, RnfD, RnfE and RnfG. The cofactor is [4Fe-4S] cluster.

Its subcellular location is the cell inner membrane. In terms of biological role, part of a membrane-bound complex that couples electron transfer with translocation of ions across the membrane. The sequence is that of Ion-translocating oxidoreductase complex subunit C from Yersinia pestis bv. Antiqua (strain Nepal516).